The chain runs to 362 residues: Peptide chain release factor 1 (362 aa).

N5-methylglutamine is present on Q237. The segment at A289 to R308 is disordered.

Belongs to the prokaryotic/mitochondrial release factor family. In terms of processing, methylated by PrmC. Methylation increases the termination efficiency of RF1.

The protein resides in the cytoplasm. Its function is as follows. Peptide chain release factor 1 directs the termination of translation in response to the peptide chain termination codons UAG and UAA. The chain is Peptide chain release factor 1 from Vibrio cholerae serotype O1 (strain ATCC 39541 / Classical Ogawa 395 / O395).